Reading from the N-terminus, the 301-residue chain is Multifunctional dioxygenase prhA (301 aa).

3 residues coordinate Fe cation: histidine 130, aspartate 132, and histidine 214.

Belongs to the PhyH family. As to quaternary structure, homodimer. It depends on Fe cation as a cofactor.

It catalyses the reaction preaustinoid A1 + 2-oxoglutarate + O2 = berkeleyone B + succinate + CO2 + H2O. The enzyme catalyses berkeleyone B + 2-oxoglutarate + O2 = berkeleydione + succinate + CO2 + H2O. It carries out the reaction preaustinoid A + 2 2-oxoglutarate + 2 O2 = berkeleytrione + 2 succinate + 2 CO2 + H2O. It functions in the pathway secondary metabolite biosynthesis; terpenoid biosynthesis. Functionally, multifunctional dioxygenase; part of the gene cluster that mediates the biosynthesis of paraherquonin, a meroterpenoid with a unique, highly congested hexacyclic molecular architecture. The first step of the pathway is the synthesis of 3,5-dimethylorsellinic acid (DMOA) by the polyketide synthase prhL. Synthesis of DMOA is followed by farnesylation by the prenyltransferase prhE, methylesterification by the methyl-transferase prhM, epoxidation of the prenyl chain by the flavin-dependent monooxygenase prhF, and cyclization of the farnesyl moiety by the terpene cyclase prhH, to yield the tetracyclic intermediate, protoaustinoid A. The short chain dehydrogenase prhI then oxidizes the C-3 alcohol group of the terpene cyclase product to transform protoaustinoid A into protoaustinoid B. The FAD-binding monooxygenase prhJ catalyzes the oxidation of protoaustinoid B into preaustinoid A which is further oxidized into preaustinoid A1 by FAD-binding monooxygenase phrK. Finally, prhA leads to berkeleydione via the berkeleyone B intermediate. PrhA is a multifunctional dioxygenase that first desaturates at C5-C6 to form berkeleyone B, followed by rearrangement of the A/B-ring to form the cycloheptadiene moiety in berkeleydione. Berkeleydione serves as the key intermediate for the biosynthesis of paraherquonin as well as many other meroterpenoids. The cytochrome P450 monooxygenases prhB, prhD, and prhN, as well as the isomerase prhC, are probably involved in the late stage of paraherquonin biosynthesis, after the production of berkeleydione. Especially prhC might be a multifunctional enzyme that catalyzes the D-ring expansion via intramolecular methoxy rearrangement, as well as the hydrolysis of the expanded D-ring. The chain is Multifunctional dioxygenase prhA from Penicillium brasilianum.